The following is a 586-amino-acid chain: Alpha-1,2-mannosyltransferase MNN5 (586 aa).

The first 29 residues, 1-29, serve as a signal peptide directing secretion; sequence MLIRLKKRKILQVIVSAVVLILFFCSVHN. N-linked (GlcNAc...) asparagine glycosylation is found at N113, N136, N259, and N264.

It belongs to the MNN1/MNT family. As to quaternary structure, interacts with SVP26. Glycosylated.

The protein resides in the golgi apparatus. It localises to the cis-Golgi network. It functions in the pathway protein modification; protein glycosylation. Its function is as follows. Responsible for addition of first and second mannose residues to the outer chain of core N-linked polysaccharides and to O-linked mannotriose. Implicated in late Golgi modifications. This is Alpha-1,2-mannosyltransferase MNN5 (MNN5) from Saccharomyces cerevisiae (strain ATCC 204508 / S288c) (Baker's yeast).